We begin with the raw amino-acid sequence, 104 residues long: Phosphate metabolism protein 6 (104 aa).

A helical membrane pass occupies residues 76–96; sequence IIVIIIVLLLYSLTMVGLFYV.

It is found in the vacuole membrane. The protein is Phosphate metabolism protein 6 (PHM6) of Saccharomyces cerevisiae (strain ATCC 204508 / S288c) (Baker's yeast).